Consider the following 195-residue polypeptide: Cytochrome c oxidase assembly protein CtaG (195 aa).

Over 1–7 (MSGGKPR) the chain is Cytoplasmic. The chain crosses the membrane as a helical; Signal-anchor for type II membrane protein span at residues 8 to 30 (SNTRTVAMLAGVVVLMGALSWAA). Over 31-195 (VPFYSWFCKV…LDAKTEPTVN (165 aa)) the chain is Periplasmic.

It belongs to the COX11/CtaG family.

It localises to the cell inner membrane. Exerts its effect at some terminal stage of cytochrome c oxidase synthesis, probably by being involved in the insertion of the copper B into subunit I. In Paracoccus denitrificans (strain Pd 1222), this protein is Cytochrome c oxidase assembly protein CtaG.